The primary structure comprises 336 residues: D-alanine--D-alanine ligase (336 aa).

The ATP-grasp domain occupies 124–330; the sequence is KMWFSALGIP…FTEYLSLVIK (207 aa). Position 154-209 (154-209) interacts with ATP; the sequence is ALENWGSIFVKAASQGSSVGCYKVDDSSKVAGVLKDAFGYAPYVIVEKTIKARELE. The Mg(2+) site is built by aspartate 284, glutamate 297, and asparagine 299.

The protein belongs to the D-alanine--D-alanine ligase family. Mg(2+) is required as a cofactor. It depends on Mn(2+) as a cofactor.

Its subcellular location is the cytoplasm. It catalyses the reaction 2 D-alanine + ATP = D-alanyl-D-alanine + ADP + phosphate + H(+). It participates in cell wall biogenesis; peptidoglycan biosynthesis. In terms of biological role, cell wall formation. The protein is D-alanine--D-alanine ligase of Shewanella sp. (strain MR-7).